A 138-amino-acid polypeptide reads, in one-letter code: Large ribosomal subunit protein bL19 (138 aa).

Belongs to the bacterial ribosomal protein bL19 family.

Functionally, this protein is located at the 30S-50S ribosomal subunit interface and may play a role in the structure and function of the aminoacyl-tRNA binding site. The chain is Large ribosomal subunit protein bL19 from Rickettsia peacockii (strain Rustic).